We begin with the raw amino-acid sequence, 324 residues long: uncharacterized protein (324 aa).

This is an uncharacterized protein from Homo sapiens (Human).